Reading from the N-terminus, the 569-residue chain is MNWQGWAEIALTLGLAVAIGWPLGVYMSRVWNGERTWLDPVLRPVEAVFYKAGGIDAQKSQSWWGYAGALLAFNFVGFLLVYAVLRLQGVLPMNPQGFSGLSGHLSFNTAISFVTNTNWQSYAGETTMSTLSQMLVLTVQNFLSAATGATVAAALARAFVANRGEGVGNFWADLVRTTLYVLLPLSFVVAIVLVALGLPQTLAAGVTAHTLEGADQKISLYAVASQEAIKMLGINGGGVFNANSAHPFENPTPLTNLITAVSINVLGWAAFFAFGRSVLAKKDIRALVIAASILLSAGAATVYWTETQVAPAQVAAQVDTSVNMEGKETRFGAPATAAWVAMTTGASNGSVNGMHSSLMPLGGGMAMFLMHLGEILPGGIGSGIAVMIVMAVLAVFVAGLMVGRTPEYLGKKIEAREVQLALLTVLAIPVATLGFSAIAAVLPEALKGLMHSGPHGMSEILYAYTSATANNGSAFAGLTANAPWWDTTMGVAMAMGRFMPIVAVLAMAGSLVGKPKLAPSAGTLPTHGGLFVGLLIGVILILGGLQFFPALALGPIVEHFQVLAAVAGH.

The next 10 membrane-spanning stretches (helical) occupy residues 5–25 (GWAEIALTLGLAVAIGWPLGV), 65–85 (GYAGALLAFNFVGFLLVYAVL), 135–155 (LVLTVQNFLSAATGATVAAAL), 179–199 (LYVLLPLSFVVAIVLVALGLP), 254–274 (LTNLITAVSINVLGWAAFFAF), 286–306 (ALVIAASILLSAGAATVYWTE), 383–403 (GIAVMIVMAVLAVFVAGLMVG), 422–442 (LLTVLAIPVATLGFSAIAAVL), 489–509 (MGVAMAMGRFMPIVAVLAMAG), and 528–548 (GGLFVGLLIGVILILGGLQFF).

This sequence belongs to the KdpA family. As to quaternary structure, the system is composed of three essential subunits: KdpA, KdpB and KdpC.

Its subcellular location is the cell inner membrane. Its function is as follows. Part of the high-affinity ATP-driven potassium transport (or Kdp) system, which catalyzes the hydrolysis of ATP coupled with the electrogenic transport of potassium into the cytoplasm. This subunit binds the periplasmic potassium ions and delivers the ions to the membrane domain of KdpB through an intramembrane tunnel. This chain is Potassium-transporting ATPase potassium-binding subunit, found in Caulobacter sp. (strain K31).